We begin with the raw amino-acid sequence, 607 residues long: Putative pentatricopeptide repeat-containing protein At1g09680 (607 aa).

9 PPR repeats span residues 239–273 (NVYVFNILMNKFCKEGNISDAQKVFDEITKRSLQP), 274–308 (TVVSFNTLINGYCKVGNLDEGFRLKHQMEKSRTRP), 309–343 (DVFTYSALINALCKENKMDGAHGLFDEMCKRGLIP), 344–378 (NDVIFTTLIHGHSRNGEIDLMKESYQKMLSKGLQP), 379–413 (DIVLYNTLVNGFCKNGDLVAARNIVDGMIRRGLRP), 414–448 (DKITYTTLIDGFCRGGDVETALEIRKEMDQNGIEL), 449–483 (DRVGFSALVCGMCKEGRVIDAERALREMLRAGIKP), 484–518 (DDVTYTMMMDAFCKKGDAQTGFKLLKEMQSDGHVP), and 519–553 (SVVTYNVLLNGLCKLGQMKNADMLLDAMLNIGVVP).

The protein belongs to the PPR family. P subfamily.

This Arabidopsis thaliana (Mouse-ear cress) protein is Putative pentatricopeptide repeat-containing protein At1g09680.